A 64-amino-acid chain; its full sequence is DNA gyrase inhibitor YacG (64 aa).

Zn(2+)-binding residues include C6, C9, C25, and C29.

It belongs to the DNA gyrase inhibitor YacG family. In terms of assembly, interacts with GyrB. It depends on Zn(2+) as a cofactor.

Its function is as follows. Inhibits all the catalytic activities of DNA gyrase by preventing its interaction with DNA. Acts by binding directly to the C-terminal domain of GyrB, which probably disrupts DNA binding by the gyrase. The chain is DNA gyrase inhibitor YacG from Haemophilus influenzae (strain ATCC 51907 / DSM 11121 / KW20 / Rd).